The primary structure comprises 873 residues: Probable beta-glucosidase A (873 aa).

The signal sequence occupies residues 1–19 (MRFGWLEVAALTAASVANA). N71, N222, and N263 each carry an N-linked (GlcNAc...) asparagine glycan. The active site involves D291. Residues N326, N333, N365, N453, N534, N553, N575, N679, and N725 are each glycosylated (N-linked (GlcNAc...) asparagine). A disordered region spans residues 730 to 765 (EDSSDDPNYGWEDSEYIPEGARDGSPQPLLKAGGAP).

It belongs to the glycosyl hydrolase 3 family.

Its subcellular location is the secreted. The enzyme catalyses Hydrolysis of terminal, non-reducing beta-D-glucosyl residues with release of beta-D-glucose.. It functions in the pathway glycan metabolism; cellulose degradation. In terms of biological role, beta-glucosidases are one of a number of cellulolytic enzymes involved in the degradation of cellulosic biomass. Catalyzes the last step releasing glucose from the inhibitory cellobiose. This chain is Probable beta-glucosidase A (bglA), found in Neosartorya fischeri (strain ATCC 1020 / DSM 3700 / CBS 544.65 / FGSC A1164 / JCM 1740 / NRRL 181 / WB 181) (Aspergillus fischerianus).